Reading from the N-terminus, the 229-residue chain is Prolactin (229 aa).

An N-terminal signal peptide occupies residues 1 to 30 (MDSKGSAQKGSRLLLLLVVSNLLLCQGVVS). A disulfide bond links Cys34 and Cys41. Residues Ser56, Ser64, and Ser120 each carry the phosphoserine modification. Disulfide bonds link Cys88-Cys204 and Cys221-Cys229.

It belongs to the somatotropin/prolactin family. In terms of assembly, interacts with PRLR.

Its subcellular location is the secreted. Functionally, prolactin acts primarily on the mammary gland by promoting lactation. The protein is Prolactin (PRL) of Capra hircus (Goat).